The sequence spans 108 residues: Tubulin-specific chaperone A (108 aa).

The residue at position 2 (Ala-2) is an N-acetylalanine.

This sequence belongs to the TBCA family. Supercomplex made of cofactors A to E. Cofactors A and D function by capturing and stabilizing tubulin in a quasi-native conformation. Cofactor E binds to the cofactor D-tubulin complex; interaction with cofactor C then causes the release of tubulin polypeptides that are committed to the native state. In terms of tissue distribution, widely expressed, but is most abundant in the testis.

It is found in the cytoplasm. It localises to the cytoskeleton. In terms of biological role, tubulin-folding protein; involved in the early step of the tubulin folding pathway. This is Tubulin-specific chaperone A (TBCA) from Bos taurus (Bovine).